The sequence spans 518 residues: D-aminopeptidase (518 aa).

The active-site Nucleophile is Ser62. Lys65 (proton donor/acceptor) is an active-site residue. A disordered region spans residues 373–392 (FGTGPEKMDISGENEAQSSM). Residues 477 to 487 (QRSMDAPSPGE) form an important for specificity region. Substrate is bound at residue Asp481.

The protein belongs to the peptidase S12 family. Homodimer.

It carries out the reaction Release of an N-terminal D-amino acid from a peptide, Xaa-|-Yaa-, in which Xaa is preferably D-Ala, D-Ser or D-Thr. D-amino acid amides and methyl esters also are hydrolyzed, as is glycine amide.. Inhibited by beta-lactam compounds such as 6-aminopenicillic acid, 7-aminocephalosporanic acid, benzylpenicillin and ampicillin. Inhibited by p-chloromercuribenzoate. Functionally, hydrolyzes N-terminal residues in D-amino acid-containing peptides. The chain is D-aminopeptidase from Brucella melitensis biotype 1 (strain ATCC 23456 / CCUG 17765 / NCTC 10094 / 16M).